The following is a 386-amino-acid chain: Lipid-A-disaccharide synthase (386 aa).

It belongs to the LpxB family.

It catalyses the reaction a lipid X + a UDP-2-N,3-O-bis[(3R)-3-hydroxyacyl]-alpha-D-glucosamine = a lipid A disaccharide + UDP + H(+). It participates in bacterial outer membrane biogenesis; LPS lipid A biosynthesis. Its function is as follows. Condensation of UDP-2,3-diacylglucosamine and 2,3-diacylglucosamine-1-phosphate to form lipid A disaccharide, a precursor of lipid A, a phosphorylated glycolipid that anchors the lipopolysaccharide to the outer membrane of the cell. The sequence is that of Lipid-A-disaccharide synthase from Chromobacterium violaceum (strain ATCC 12472 / DSM 30191 / JCM 1249 / CCUG 213 / NBRC 12614 / NCIMB 9131 / NCTC 9757 / MK).